The chain runs to 70 residues: MKNQFAVLLVALVLLQLFSQSEAFWSTLLSIGKSLLGKRGLRNFDLEQMDDTYEPELSEADLRYLQDLLR.

An N-terminal signal peptide occupies residues 1–23; sequence MKNQFAVLLVALVLLQLFSQSEA. A Leucine amide modification is found at L36. The propeptide occupies 37–70; the sequence is GKRGLRNFDLEQMDDTYEPELSEADLRYLQDLLR.

Belongs to the non-disulfide-bridged peptide (NDBP) superfamily. Short antimicrobial peptide (group 4) family. In terms of tissue distribution, expressed by the venom gland.

The protein localises to the secreted. The protein resides in the target cell membrane. Its function is as follows. Antimicrobial peptide with potent activity against bacteria S.aureus (MIC=4.7 uM) and E.coli (MIC=31.5 uM), and pathogenic yeasts C.albicans (MIC=25 uM) and C.glabrata (MIC=12.5 uM). Is not very effective against P.aeruginosa (MIC=150 and &gt;300 uM). Also provokes moderate hemolysis on human erythrocytes (HC(50)=10.5 uM). The chain is Antimicrobial peptide VpCT1 from Mesomexovis punctatus (Scorpion).